A 325-amino-acid chain; its full sequence is Elongation factor P--(R)-beta-lysine ligase (325 aa).

76-78 serves as a coordination point for substrate; that stretch reads SPE. ATP-binding positions include 100–102 and N109; that span reads RNE. Y118 contributes to the substrate binding site. 244-245 contacts ATP; sequence EL. E251 is a substrate binding site. Position 300 (G300) interacts with ATP.

It belongs to the class-II aminoacyl-tRNA synthetase family. EpmA subfamily. Homodimer.

It carries out the reaction D-beta-lysine + L-lysyl-[protein] + ATP = N(6)-((3R)-3,6-diaminohexanoyl)-L-lysyl-[protein] + AMP + diphosphate + H(+). With EpmB is involved in the beta-lysylation step of the post-translational modification of translation elongation factor P (EF-P). Catalyzes the ATP-dependent activation of (R)-beta-lysine produced by EpmB, forming a lysyl-adenylate, from which the beta-lysyl moiety is then transferred to the epsilon-amino group of a conserved specific lysine residue in EF-P. This Yersinia enterocolitica serotype O:8 / biotype 1B (strain NCTC 13174 / 8081) protein is Elongation factor P--(R)-beta-lysine ligase.